The primary structure comprises 147 residues: Ribonuclease H (147 aa).

Residues 1 to 142 (MREVIIYTDG…CDELARAAIA (142 aa)) enclose the RNase H type-1 domain. 4 residues coordinate Mg(2+): Asp9, Glu47, Asp69, and Asp134.

It belongs to the RNase H family. Monomer. Mg(2+) serves as cofactor.

The protein localises to the cytoplasm. The enzyme catalyses Endonucleolytic cleavage to 5'-phosphomonoester.. In terms of biological role, endonuclease that specifically degrades the RNA of RNA-DNA hybrids. This chain is Ribonuclease H, found in Symbiobacterium thermophilum (strain DSM 24528 / JCM 14929 / IAM 14863 / T).